Consider the following 128-residue polypeptide: uncharacterized protein (128 aa).

The protein belongs to the HesB/IscA family.

This is an uncharacterized protein from Buchnera aphidicola subsp. Baizongia pistaciae (strain Bp).